Reading from the N-terminus, the 319-residue chain is Beta-ketoacyl-[acyl-carrier-protein] synthase III (319 aa).

Active-site residues include Cys113 and His246. The interval 247–251 (QANIR) is ACP-binding. Residue Asn276 is part of the active site.

This sequence belongs to the thiolase-like superfamily. FabH family. Homodimer.

It is found in the cytoplasm. The enzyme catalyses malonyl-[ACP] + acetyl-CoA + H(+) = 3-oxobutanoyl-[ACP] + CO2 + CoA. Its pathway is lipid metabolism; fatty acid biosynthesis. Functionally, catalyzes the condensation reaction of fatty acid synthesis by the addition to an acyl acceptor of two carbons from malonyl-ACP. Catalyzes the first condensation reaction which initiates fatty acid synthesis and may therefore play a role in governing the total rate of fatty acid production. Possesses both acetoacetyl-ACP synthase and acetyl transacylase activities. Its substrate specificity determines the biosynthesis of branched-chain and/or straight-chain of fatty acids. The polypeptide is Beta-ketoacyl-[acyl-carrier-protein] synthase III (Ehrlichia canis (strain Jake)).